Here is a 212-residue protein sequence, read N- to C-terminus: N-(5'-phosphoribosyl)anthranilate isomerase (212 aa).

The protein belongs to the TrpF family.

It carries out the reaction N-(5-phospho-beta-D-ribosyl)anthranilate = 1-(2-carboxyphenylamino)-1-deoxy-D-ribulose 5-phosphate. It functions in the pathway amino-acid biosynthesis; L-tryptophan biosynthesis; L-tryptophan from chorismate: step 3/5. This chain is N-(5'-phosphoribosyl)anthranilate isomerase, found in Roseiflexus castenholzii (strain DSM 13941 / HLO8).